A 467-amino-acid chain; its full sequence is UDP-N-acetylmuramoylalanine--D-glutamate ligase (467 aa).

121-127 (GTNGKST) serves as a coordination point for ATP.

It belongs to the MurCDEF family.

Its subcellular location is the cytoplasm. It carries out the reaction UDP-N-acetyl-alpha-D-muramoyl-L-alanine + D-glutamate + ATP = UDP-N-acetyl-alpha-D-muramoyl-L-alanyl-D-glutamate + ADP + phosphate + H(+). The protein operates within cell wall biogenesis; peptidoglycan biosynthesis. In terms of biological role, cell wall formation. Catalyzes the addition of glutamate to the nucleotide precursor UDP-N-acetylmuramoyl-L-alanine (UMA). The protein is UDP-N-acetylmuramoylalanine--D-glutamate ligase of Brucella suis biovar 1 (strain 1330).